Reading from the N-terminus, the 651-residue chain is Intraflagellar transport protein 70A (651 aa).

TPR repeat units lie at residues 8 to 41, 42 to 75, 140 to 173, 175 to 207, 379 to 410, 411 to 443, and 445 to 478; these read DGEY…HTKS, RAAL…HPEV, PDYD…LGYQ, DLAY…GIRE, VTKQ…EKYI, PVLM…CNEH, and TWKL…HYEN. Residues 494-521 adopt a coiled-coil conformation; that stretch reads YIMTSQNEEAEELMRKIEKEEEQISYDD. One copy of the TPR 8 repeat lies at 530–563; that stretch reads CIVNLVIGTLYCAKGNYDFGISRVIKSLEPYNKK.

Belongs to the TTC30/dfy-1/fleer family. In terms of tissue distribution, localizes to the cilia of many ciliated epithelial cell types including pronephric cells, olfactory placode, the brain ventricle and lateral line organs.

It localises to the cell projection. It is found in the cilium. Functionally, plays a role in anterograde intraflagellar transport (IFT), the process by which cilia precursors are transported from the base of the cilium to the site of their incorporation at the tip. Required for polyglutamylation of axonemal tubulin, which is a prerequisite for correct assembly of cilia and for normal cilia beat amplitude. Does not seem to be required for neuronal microtubule polyglutamylation. The chain is Intraflagellar transport protein 70A (ift70a) from Danio rerio (Zebrafish).